Consider the following 230-residue polypeptide: DNA repair protein RecO (230 aa).

The protein belongs to the RecO family.

Functionally, involved in DNA repair and RecF pathway recombination. The chain is DNA repair protein RecO from Pseudoalteromonas translucida (strain TAC 125).